A 436-amino-acid polypeptide reads, in one-letter code: Histone acetyltransferase type B subunit 2 (436 aa).

5 WD repeats span residues aspartate 136–threonine 176, glycine 187–lysine 227, histidine 237–alanine 277, glutamine 284–histidine 324, and serine 328–threonine 368. An interaction with the histone H4 N-terminus region spans residues glutamate 370–aspartate 374. A WD 6 repeat occupies glycine 385–aspartate 425.

The protein belongs to the WD repeat RBAP46/RBAP48/MSI1 family. In terms of assembly, component of the HAT-B complex composed of at least hat1 and hat2. The HAT-B complex binds to histone H4 tail.

The protein resides in the cytoplasm. It is found in the nucleus. Its function is as follows. Regulatory subunit of the histone acetylase B (HAT-B) complex. The complex acetylates 'Lys-12' of histone H4 which is required for telomeric silencing. The sequence is that of Histone acetyltransferase type B subunit 2 (hat2) from Aspergillus fumigatus (strain ATCC MYA-4609 / CBS 101355 / FGSC A1100 / Af293) (Neosartorya fumigata).